Here is a 216-residue protein sequence, read N- to C-terminus: MSGRFLVLEGIDGCGKTTQLRHLANWLPRSGLMPEGARLHLTREPGGTALGIALRKLVLHPPGDASPEPLAELLLYAADRAQHVAQLIRPALEQGHWVLSDRFSGSTLAYQGYGRELDLDLIQQLEQIATAGLVPDLTFWLELPVEESLLRRDARSNDRIEAEGVDFLTRVATGFAVLARERSWVPLQADQQVESVSSALESQLKHHFGPLQESMR.

Position 10 to 17 (10 to 17) interacts with ATP; sequence GIDGCGKT.

This sequence belongs to the thymidylate kinase family.

It carries out the reaction dTMP + ATP = dTDP + ADP. Functionally, phosphorylation of dTMP to form dTDP in both de novo and salvage pathways of dTTP synthesis. This is Thymidylate kinase from Prochlorococcus marinus (strain MIT 9313).